A 203-amino-acid polypeptide reads, in one-letter code: GTP cyclohydrolase-2 (203 aa).

Residue 49 to 53 (RIHSE) participates in GTP binding. Zn(2+)-binding residues include Cys-54, Cys-65, and Cys-67. GTP-binding positions include Gln-70, 92–94 (EGR), and Thr-114. Asp-126 (proton acceptor) is an active-site residue. Arg-128 acts as the Nucleophile in catalysis. 2 residues coordinate GTP: Thr-149 and Lys-154.

The protein belongs to the GTP cyclohydrolase II family. Requires Zn(2+) as cofactor.

It catalyses the reaction GTP + 4 H2O = 2,5-diamino-6-hydroxy-4-(5-phosphoribosylamino)-pyrimidine + formate + 2 phosphate + 3 H(+). The protein operates within cofactor biosynthesis; riboflavin biosynthesis; 5-amino-6-(D-ribitylamino)uracil from GTP: step 1/4. Functionally, catalyzes the conversion of GTP to 2,5-diamino-6-ribosylamino-4(3H)-pyrimidinone 5'-phosphate (DARP), formate and pyrophosphate. This is GTP cyclohydrolase-2 from Shewanella sp. (strain ANA-3).